Here is a 1146-residue protein sequence, read N- to C-terminus: MLELPFTTIRPNCRLRQNLGILIILQCVLTCYNFNLEQRLPIVKYGHPHSHFGYSVATHTIGEANGPNKTNCVLVGAPLDQNRQPNTTHSGALWRCPMTQRFDDCEQVITDGRRNFDSEILSPPGNDEIKEDQWMGVTVRSNPLQANGSGGKVIVCAHRYMYIVRENRYGQGLCYLLTNDLQFEEVHEPCKGRPVQRQHEDYGLCQAGTSAALLDDDTMVLGSPGPYTWRGSIWVTQVGGEYLQRDKTTYYSDHSDLNSPVDKYSYLGMSVTGGRFFGHMSYAAGAPRSEGHGQVVIFDKSTDNPIPVHSILDGEQFGSSFGYELATADINGDHRPDLIVAAPLYFTKTEGGAVYVYQNIQDTLPMKYTLKLTGPLESRFGLALANIGDLNKDNCEDLAVGAPYEGNGVVYIYLGSSQGLNSKPAQKIQASELGGTIPNGQPIRTFGISISGNTDLDDNSYPDVVIGAFNSSAAVILLARPIISIQTSVQRKELHNMDPNTPGCLDDPASNLTCFTFRACCSIEPYDEKNKELRLAYSVEAETFDHLKKFSRVFFFDRENKRTNVLSRVVRVHTNGRTECQAVTGYIKANTRDIQTPVRFRLKYSLVEPPLADSALVRLNPILDQTQAHVDFEGTFQKDCGDDDLCESNLIIRVEPNITESSGNEYTLILDETELEVRINVSNLADSAYEAQLFIAHQAGVSYVATKKPTNATCNSYNTTLVACSLGNPMLRDTTTFVTIRFQPKGLEPSEKIMLFHIFANTTSKLVGPERPERDLRVNVVRRAKLNFRGWAIPEQSFYSGSSVANSVANTAATDIEGHGPMGMDDVGSQVHHMFTIFNEGPSTAPKVQMVIHWPYSLYSDPQSGRPVQYLLYLEQVPTVEVSQGECHVAKEYVNPLNLASGSRENPAYLSAPAQMRMFPSQSRHSFNKSLIHSQRSYYSSSHRDDHSDDTQSNRNRVRRSFLERVTRLERLMYDPESSNAANGKKQDIVELDCNKGATNCVRIECDILNMPALSEAQVVVKARLWNSTLVSEYPRVERVRIFSTATAQIPESYGVEVMDHNNIEVETRAYPELRNQQRDTSIPWLIIILGIVGGLLLLALVTYVLWKVGFFKRIRPTDPTLSGNLEKMNEEKPFLAPSKNTHHVF.

The signal sequence occupies residues 1 to 30; it reads MLELPFTTIRPNCRLRQNLGILIILQCVLT. At 31–1085 the chain is on the extracellular side; sequence CYNFNLEQRL…NQQRDTSIPW (1055 aa). 7 FG-GAP repeats span residues 38-105, 121-186, 193-245, 254-303, 304-366, 367-422, and 432-494; these read QRLP…FDDC, LSPP…FEEV, RPVQ…YLQR, HSDL…KSTD, NPIP…TLPM, KYTL…GLNS, and ELGG…RKEL. N-linked (GlcNAc...) asparagine glycosylation is found at asparagine 68, asparagine 86, and asparagine 147. N-linked (GlcNAc...) asparagine glycosylation is found at asparagine 470, asparagine 511, asparagine 657, asparagine 680, asparagine 711, asparagine 718, asparagine 761, and asparagine 928. A disordered region spans residues 938 to 958; that stretch reads YYSSSHRDDHSDDTQSNRNRV. Basic and acidic residues predominate over residues 942–952; the sequence is SHRDDHSDDTQ. N-linked (GlcNAc...) asparagine glycosylation occurs at asparagine 1027. A helical membrane pass occupies residues 1086 to 1106; it reads LIIILGIVGGLLLLALVTYVL. Residues 1107–1146 lie on the Cytoplasmic side of the membrane; the sequence is WKVGFFKRIRPTDPTLSGNLEKMNEEKPFLAPSKNTHHVF.

The protein belongs to the integrin alpha chain family. As to quaternary structure, heterodimer of an alpha and a beta subunit. The alpha subunit is composed of a heavy and a light chain linked by a disulfide bond. Alpha-PS1 associates with beta-PS. Expressed in follicle cells (at protein level). At syncytial blastoderm stage, expressed in the ectoderm but not in the mesodermal precursors. At embryonic stage 7, expressed in dorsal and ventrolateral ectoderm and in some yolk nuclei. At late stage 10, expression is homogeneous in the ectoderm and is particularly abundant in the anterior and posterior midgut primordia. At stage 11, strongly expressed in a metameric pattern in the ectoderm, in the proctodeum and in the posterior midgut primordium. At stage 12, accumulates at the segment boundaries that start to become morphologically visible, similar expression pattern is observed in the central nervous system. In third larval instar wing imaginal disk, strongly expressed in the dorsal compartment, in the adepithelial cells and in patches on the peripodial membrane covering the imaginal disk to the outside.

It localises to the apical cell membrane. The protein resides in the lateral cell membrane. It is found in the basal cell membrane. In terms of biological role, integrin alpha-PS1/beta-PS is a receptor for laminin. The protein is Integrin alpha-PS1 (mew) of Drosophila melanogaster (Fruit fly).